We begin with the raw amino-acid sequence, 292 residues long: Probable 2-(5''-triphosphoribosyl)-3'-dephosphocoenzyme-A synthase (292 aa).

This sequence belongs to the CitG/MdcB family.

It catalyses the reaction 3'-dephospho-CoA + ATP = 2'-(5''-triphospho-alpha-D-ribosyl)-3'-dephospho-CoA + adenine. This chain is Probable 2-(5''-triphosphoribosyl)-3'-dephosphocoenzyme-A synthase, found in Shigella flexneri serotype 5b (strain 8401).